Consider the following 570-residue polypeptide: Protein NRT1/ PTR FAMILY 8.2 (570 aa).

At Thr-99 the chain carries Phosphothreonine. The next 10 helical transmembrane spans lie at 100–120 (IASF…SASV), 136–156 (AGQT…TGGI), 182–202 (FFNW…SVLV), 210–230 (WGWG…FFFA), 335–355 (IWAT…VFVL), 370–390 (IPSA…APVY), 414–434 (IGIG…LEVA), 454–474 (IFWQ…TFIG), 493–513 (ALSL…VTLV), and 537–557 (YFFW…LWIA).

This sequence belongs to the major facilitator superfamily. Proton-dependent oligopeptide transporter (POT/PTR) (TC 2.A.17) family. As to expression, expressed in developing and germinating pollen grains and ovules.

Its subcellular location is the cell membrane. Its function is as follows. Peptide transporter. Mediates the transport of di- and tripeptides. High affinity transporter. Involved in the uptake of peptides during pollen germination and tube growth. In Arabidopsis thaliana (Mouse-ear cress), this protein is Protein NRT1/ PTR FAMILY 8.2 (NPF8.2).